We begin with the raw amino-acid sequence, 158 residues long: Hypoxanthine DNA glycosylase (158 aa).

Asn39 is a catalytic residue.

This sequence belongs to the uracil-DNA glycosylase (UDG) superfamily. Type 6 (HDG) family.

In terms of biological role, excises hypoxanthine, a deamination product of adenine, from double-stranded DNA. Acts on double-stranded DNA containing G/I, T/I, A/I and C/I base pairs, but not on single-stranded inosine-containing DNA. Also has minor xanthine DNA glycosylase activity. Lacks any detectable uracil-DNA glycosylase activity. The protein is Hypoxanthine DNA glycosylase of Methanosarcina barkeri (strain Fusaro / DSM 804).